A 411-amino-acid chain; its full sequence is LIM domain-binding protein 1 (411 aa).

Position 2 is an N-acetylserine (serine 2). At threonine 61 the chain carries Phosphothreonine. Phosphoserine is present on residues serine 265 and serine 302. 2 disordered regions span residues 283–330 (APPA…TFAL) and 367–411 (DAAN…QASQ). The segment covering 302–318 (SGGSTMSSGGGNTNNSN) has biased composition (low complexity). Residues 336–375 (DVMVVGEPTLMGGEFGDEDERLITRLENTQFDAANGIDDE) form the LIM interaction domain (LID) domain.

It belongs to the LDB family. In terms of assembly, interacts with ESR1. Forms homodimers and heterodimers. Interacts with and activates LHX1/LIM1. Interacts with the LIM domains of ISL1 and LMO2. Can assemble in a complex with LMO2 and TAL1/SCL but does not interact with TAL1/SCL directly. Strongly interacts with the LIM2 domain of LMX1A and more weakly with the LIM1 domain. Homodimerization is not required for, and does not effect, LMX1A-binding. Component of a nuclear TAL-1 complex composed at least of CBFA2T3, LDB1, TAL1 and TCF3. Interacts with LHX6 and LHX9. At neuronal promoters, forms a complex with LHX3 involved in the specification of interneurons, in motor neurons, it is displaced by ISL1 to form a ternary complex in which ISL1 contacts both LHX3 and LDB1. Interacts with SLK; leading to negatively regulate SLK kinase activity. Interacts with YWHAZ. Interacts with PRDM1/BLIMP1. Interacts with LMO4. Interacts with RLIM/RNF12; the interaction inhibits the ubiquitination of LMO proteins. In terms of processing, ubiquitinated by RLIM/RNF12, leading to its degradation by the proteasome. As to expression, expressed in a wide range of adult tissues including brain, heart, skeletal muscle, colon, thymus, spleen, kidney, liver, small intestine, lung and peripheral blood leukocytes.

Its subcellular location is the nucleus. Its function is as follows. Binds to the LIM domain of a wide variety of LIM domain-containing transcription factors. May regulate the transcriptional activity of LIM-containing proteins by determining specific partner interactions. Plays a role in the development of interneurons and motor neurons in cooperation with LHX3 and ISL1. Acts synergistically with LHX1/LIM1 in axis formation and activation of gene expression. Acts with LMO2 in the regulation of red blood cell development, maintaining erythroid precursors in an immature state. In Homo sapiens (Human), this protein is LIM domain-binding protein 1 (LDB1).